The chain runs to 402 residues: S-adenosylmethionine synthase (402 aa).

His-15 contributes to the ATP binding site. Residue Asp-17 coordinates Mg(2+). Glu-43 provides a ligand contact to K(+). L-methionine contacts are provided by Glu-56 and Gln-99. The segment at 99–109 is flexible loop; the sequence is QSPDIAQGVDT. Residues 174 to 176, 247 to 248, Asp-256, 262 to 263, Ala-279, and Lys-283 each bind ATP; these read DGK, RF, and RK. L-methionine is bound at residue Asp-256. Residue Lys-287 participates in L-methionine binding.

This sequence belongs to the AdoMet synthase family. As to quaternary structure, homotetramer; dimer of dimers. It depends on Mg(2+) as a cofactor. Requires K(+) as cofactor.

It is found in the cytoplasm. It carries out the reaction L-methionine + ATP + H2O = S-adenosyl-L-methionine + phosphate + diphosphate. The protein operates within amino-acid biosynthesis; S-adenosyl-L-methionine biosynthesis; S-adenosyl-L-methionine from L-methionine: step 1/1. In terms of biological role, catalyzes the formation of S-adenosylmethionine (AdoMet) from methionine and ATP. The overall synthetic reaction is composed of two sequential steps, AdoMet formation and the subsequent tripolyphosphate hydrolysis which occurs prior to release of AdoMet from the enzyme. The polypeptide is S-adenosylmethionine synthase (Streptomyces avermitilis (strain ATCC 31267 / DSM 46492 / JCM 5070 / NBRC 14893 / NCIMB 12804 / NRRL 8165 / MA-4680)).